Consider the following 451-residue polypeptide: Bifunctional protein GlmU (451 aa).

A pyrophosphorylase region spans residues 1-225 (MLEIIILAAG…EYEVLGVNNR (225 aa)). UDP-N-acetyl-alpha-D-glucosamine-binding positions include 7-10 (LAAG), K21, Q72, 77-78 (GT), 99-101 (YGD), G136, E150, N165, and N223. Residue D101 coordinates Mg(2+). Position 223 (N223) interacts with Mg(2+). The tract at residues 226-246 (LQQAELERIFQRQVAEELMVA) is linker. The tract at residues 247-451 (GATLLDPARL…IKGWARPVKK (205 aa)) is N-acetyltransferase. R329 and K347 together coordinate UDP-N-acetyl-alpha-D-glucosamine. Residue H359 is the Proton acceptor of the active site. UDP-N-acetyl-alpha-D-glucosamine is bound by residues Y362 and N373. Residues A376, 382 to 383 (NY), S401, A419, and R436 contribute to the acetyl-CoA site.

In the N-terminal section; belongs to the N-acetylglucosamine-1-phosphate uridyltransferase family. It in the C-terminal section; belongs to the transferase hexapeptide repeat family. In terms of assembly, homotrimer. Requires Mg(2+) as cofactor.

It is found in the cytoplasm. The catalysed reaction is alpha-D-glucosamine 1-phosphate + acetyl-CoA = N-acetyl-alpha-D-glucosamine 1-phosphate + CoA + H(+). It catalyses the reaction N-acetyl-alpha-D-glucosamine 1-phosphate + UTP + H(+) = UDP-N-acetyl-alpha-D-glucosamine + diphosphate. It participates in nucleotide-sugar biosynthesis; UDP-N-acetyl-alpha-D-glucosamine biosynthesis; N-acetyl-alpha-D-glucosamine 1-phosphate from alpha-D-glucosamine 6-phosphate (route II): step 2/2. The protein operates within nucleotide-sugar biosynthesis; UDP-N-acetyl-alpha-D-glucosamine biosynthesis; UDP-N-acetyl-alpha-D-glucosamine from N-acetyl-alpha-D-glucosamine 1-phosphate: step 1/1. Its pathway is bacterial outer membrane biogenesis; LPS lipid A biosynthesis. Functionally, catalyzes the last two sequential reactions in the de novo biosynthetic pathway for UDP-N-acetylglucosamine (UDP-GlcNAc). The C-terminal domain catalyzes the transfer of acetyl group from acetyl coenzyme A to glucosamine-1-phosphate (GlcN-1-P) to produce N-acetylglucosamine-1-phosphate (GlcNAc-1-P), which is converted into UDP-GlcNAc by the transfer of uridine 5-monophosphate (from uridine 5-triphosphate), a reaction catalyzed by the N-terminal domain. The sequence is that of Bifunctional protein GlmU from Saccharophagus degradans (strain 2-40 / ATCC 43961 / DSM 17024).